A 1227-amino-acid polypeptide reads, in one-letter code: Pre-mRNA-splicing factor ATP-dependent RNA helicase PRP16 (1227 aa).

At Gly2 the chain carries N-acetylglycine. Position 56 is a phosphoserine (Ser56). The span at 60–89 shows a compositional bias: basic and acidic residues; the sequence is REREEKDDGEDKKKSKVSSYKDWEESKDDQ. The tract at residues 60-320 is disordered; that stretch reads REREEKDDGE…ERQQWEDDQR (261 aa). At Thr117 the chain carries Phosphothreonine. Residues 128–201 show a composition bias toward basic and acidic residues; it reads FWERSRQRER…SRRNEPESPR (74 aa). A phosphoserine mark is found at Ser199 and Ser224. A compositionally biased stretch (polar residues) spans 222–239; the sequence is YGSSRRSQWESPSPTPSY. The span at 240 to 263 shows a compositional bias: basic and acidic residues; that stretch reads RDSERSHRLSTRDRDRSVRGKYSD. Position 260 is an N6-acetyllysine (Lys260). Positions 300–310 are enriched in acidic residues; the sequence is GEEGISFDTEE. Over residues 311–320 the composition is skewed to basic and acidic residues; it reads ERQQWEDDQR. Glycyl lysine isopeptide (Lys-Gly) (interchain with G-Cter in SUMO2) cross-links involve residues Lys482, Lys483, and Lys504. One can recognise a Helicase ATP-binding domain in the interval 542-705; the sequence is LTIIRDNSIV…FGNVPIFHIP (164 aa). 555-562 lines the ATP pocket; sequence GETGSGKT. The DEAH box motif lies at 652 to 655; sequence DEAH. One can recognise a Helicase C-terminal domain in the interval 727 to 902; that stretch reads AVKQSLQVHL…NVVLLLKSLG (176 aa). Positions 1155–1227 are disordered; sequence GKSRQENRRR…PRRTPARFGL (73 aa). Basic and acidic residues-rich tracts occupy residues 1157 to 1169 and 1181 to 1194; these read SRQENRRRAKEEA and EQLRARRQEQEKRS. A Glycyl lysine isopeptide (Lys-Gly) (interchain with G-Cter in SUMO2) cross-link involves residue Lys1166. Ser1194 bears the Phosphoserine mark.

Belongs to the DEAD box helicase family. DEAH subfamily. PRP16 sub-subfamily. In terms of assembly, identified in the spliceosome C complex.

The protein resides in the nucleus. It catalyses the reaction ATP + H2O = ADP + phosphate + H(+). Functionally, probable ATP-binding RNA helicase. Involved in pre-mRNA splicing as component of the spliceosome. The chain is Pre-mRNA-splicing factor ATP-dependent RNA helicase PRP16 (DHX38) from Homo sapiens (Human).